Reading from the N-terminus, the 159-residue chain is Ribosomal RNA large subunit methyltransferase H (159 aa).

Residues Leu76, Gly108, and 127-132 (FGKLTL) each bind S-adenosyl-L-methionine.

The protein belongs to the RNA methyltransferase RlmH family. As to quaternary structure, homodimer.

Its subcellular location is the cytoplasm. It carries out the reaction pseudouridine(1915) in 23S rRNA + S-adenosyl-L-methionine = N(3)-methylpseudouridine(1915) in 23S rRNA + S-adenosyl-L-homocysteine + H(+). Specifically methylates the pseudouridine at position 1915 (m3Psi1915) in 23S rRNA. The polypeptide is Ribosomal RNA large subunit methyltransferase H (Streptococcus sanguinis (strain SK36)).